Consider the following 594-residue polypeptide: Protein TRANSPORT INHIBITOR RESPONSE 1 (594 aa).

One can recognise an F-box domain in the interval 3 to 50 (KRIALSFPEEVLEHVFSFIQLDKDRNSVSLVCKSWYEIERWCRRKVFI). Lys-74 serves as a coordination point for 1D-myo-inositol hexakisphosphate. Residues 81–82 (DF) form an interaction with auxin-responsive proteins region. Residues 113–114 (KR) and Arg-344 contribute to the 1D-myo-inositol hexakisphosphate site. Residues 347-352 (PSEPFV) are interaction with auxin-responsive proteins. A 1D-myo-inositol hexakisphosphate-binding site is contributed by 401–403 (RFR). Arg-403 serves as a coordination point for (indol-3-yl)acetate. The interval 405–409 (CIIEP) is interaction with auxin-responsive proteins. Arg-436 contacts 1D-myo-inositol hexakisphosphate. Position 438 to 439 (438 to 439 (SL)) interacts with (indol-3-yl)acetate. Residues 464–465 (AF) are interaction with auxin-responsive proteins. 1D-myo-inositol hexakisphosphate contacts are provided by residues 484–485 (RK) and Arg-509.

In terms of assembly, interacts with auxin. Part of a SCF E3 ubiquitin ligase complex SCF(TIR1) composed of SKP1, CUL1, RBX1 and TIR1. SCF(TIR1) interacts with the COP9 signalosome (CSN) complex. Interacts with Aux/IAA proteins (IAA3, IAA7, IAA12 and IAA17) in an auxin-dependent manner. The interaction with IAA3, a negative regulator of auxin responses, is promoted by auxin, but repressed by juglon (5-hydroxy-1,4-naphthoquinone). Interactions with auxin-responsive proteins is inactivated by auxin antagonists. Expressed in roots, stems, leaves and flowers. In adult plants, mostly expressed in floral stigma, anther filaments, abscission zones and vascular tissues.

Its subcellular location is the nucleus. It functions in the pathway protein modification; protein ubiquitination. Functionally, auxin receptor that mediates Aux/IAA proteins proteasomal degradation and auxin-regulated transcription. The SCF(TIR1) E3 ubiquitin ligase complex is involved in auxin-mediated signaling pathway that regulate root and hypocotyl growth, lateral root formation, cell elongation, and gravitropism. Appears to allow pericycle cells to overcome G2 arrest prior to lateral root development. Plays a role in ethylene signaling in roots. Confers sensitivity to the virulent bacterial pathogen P.syringae. The chain is Protein TRANSPORT INHIBITOR RESPONSE 1 (TIR1) from Arabidopsis thaliana (Mouse-ear cress).